Reading from the N-terminus, the 226-residue chain is Biosynthetic peptidoglycan transglycosylase (226 aa).

The chain crosses the membrane as a helical span at residues 8–28 (FFGWTWFVMWRFLLLLALLLL).

It belongs to the glycosyltransferase 51 family.

It localises to the cell inner membrane. It catalyses the reaction [GlcNAc-(1-&gt;4)-Mur2Ac(oyl-L-Ala-gamma-D-Glu-L-Lys-D-Ala-D-Ala)](n)-di-trans,octa-cis-undecaprenyl diphosphate + beta-D-GlcNAc-(1-&gt;4)-Mur2Ac(oyl-L-Ala-gamma-D-Glu-L-Lys-D-Ala-D-Ala)-di-trans,octa-cis-undecaprenyl diphosphate = [GlcNAc-(1-&gt;4)-Mur2Ac(oyl-L-Ala-gamma-D-Glu-L-Lys-D-Ala-D-Ala)](n+1)-di-trans,octa-cis-undecaprenyl diphosphate + di-trans,octa-cis-undecaprenyl diphosphate + H(+). The protein operates within cell wall biogenesis; peptidoglycan biosynthesis. In terms of biological role, peptidoglycan polymerase that catalyzes glycan chain elongation from lipid-linked precursors. This is Biosynthetic peptidoglycan transglycosylase from Shewanella frigidimarina (strain NCIMB 400).